A 645-amino-acid chain; its full sequence is Threonine--tRNA ligase (645 aa).

The TGS domain occupies 1 to 61 (MPVITLPDGS…SDDAKLSIIT (61 aa)). Residues 243–534 (DHRKLGKKLD…LIEDTEGAFP (292 aa)) form a catalytic region. Residues cysteine 334, histidine 385, and histidine 511 each contribute to the Zn(2+) site.

This sequence belongs to the class-II aminoacyl-tRNA synthetase family. Homodimer. Zn(2+) is required as a cofactor.

The protein localises to the cytoplasm. The catalysed reaction is tRNA(Thr) + L-threonine + ATP = L-threonyl-tRNA(Thr) + AMP + diphosphate + H(+). Its function is as follows. Catalyzes the attachment of threonine to tRNA(Thr) in a two-step reaction: L-threonine is first activated by ATP to form Thr-AMP and then transferred to the acceptor end of tRNA(Thr). Also edits incorrectly charged L-seryl-tRNA(Thr). This Marinomonas sp. (strain MWYL1) protein is Threonine--tRNA ligase.